Reading from the N-terminus, the 356-residue chain is Stomatin-like protein 2, mitochondrial (356 aa).

The N-terminal 28 residues, 1-28 (MLARAARGTGALLLKGSVQASARAPRRA), are a transit peptide targeting the mitochondrion. Position 17 is a phosphoserine; by PKC/PRKCZ (Ser17). Tyr124 carries the phosphotyrosine modification. Lys145 is modified (N6-acetyllysine; alternate). An N6-succinyllysine; alternate modification is found at Lys145. Positions 215-252 (INVAEGKKQAQILASEAEKAEQINQAAGEASAVLAKAK) form a coiled coil. An N6-acetyllysine modification is found at Lys233. The tract at residues 326 to 356 (EAQDSVSSRSSRDVRSTDASLDEELDRVKLS) is disordered. A Phosphoserine modification is found at Ser330.

Belongs to the band 7/mec-2 family. As to quaternary structure, forms homooligomers. Interacts with MFN2; may form heterooligomers with this mediator of mitochondrial fusion. Interacts with PHB1 and PHB2; stabilizes and recruits them to cardiolipin-enriched mitochondrial membranes. Interacts with CACNA2D2.

The protein resides in the cell membrane. It localises to the mitochondrion. Its subcellular location is the mitochondrion inner membrane. The protein localises to the mitochondrion intermembrane space. It is found in the membrane raft. The protein resides in the cytoplasm. It localises to the cytoskeleton. Its function is as follows. Mitochondrial protein that probably regulates the biogenesis and the activity of mitochondria. Stimulates cardiolipin biosynthesis, binds cardiolipin-enriched membranes where it recruits and stabilizes some proteins including prohibitin and may therefore act in the organization of functional microdomains in mitochondrial membranes. Through regulation of the mitochondrial function may play a role into several biological processes including cell migration, cell proliferation, T-cell activation, calcium homeostasis and cellular response to stress. May play a role in calcium homeostasis through negative regulation of calcium efflux from mitochondria. Required for mitochondrial hyperfusion a pro-survival cellular response to stress which results in increased ATP production by mitochondria. May also regulate the organization of functional domains at the plasma membrane and play a role in T-cell activation through association with the T-cell receptor signaling complex and its regulation. The chain is Stomatin-like protein 2, mitochondrial (STOML2) from Bos taurus (Bovine).